We begin with the raw amino-acid sequence, 213 residues long: Membrane-spanning 4-domains subfamily A member 3 (213 aa).

Topologically, residues 1–26 are cytoplasmic; it reads MKPEETGGSVYQPLDESRHVQRGVLQ. A helical membrane pass occupies residues 27–47; the sequence is ALGAIQILNGILILALGIFLV. Residues 48–58 are Extracellular-facing; the sequence is CLQHVSHHFRH. A helical membrane pass occupies residues 59–79; that stretch reads FFFFTFYTGYPLWGAVFFISS. Residues 80-97 are Cytoplasmic-facing; the sequence is GSLTVAAGRNPTRMLMQN. The chain crosses the membrane as a helical span at residues 98-118; it reads SFGINIASTTIAFVGTVFLSV. The Extracellular segment spans residues 119–148; the sequence is HLAFNTQAFKGCQSSPSPDVCISLGSSSDG. A helical membrane pass occupies residues 149-169; that stretch reads LVSLMLILTLLELSVTISISA. Topologically, residues 170-213 are cytoplasmic; the sequence is MWCLGNVCGLREAITSPPNSVESGILPEGSDSENLNTQPQASEE. The interval 189-213 is disordered; that stretch reads SVESGILPEGSDSENLNTQPQASEE. The segment covering 201–213 has biased composition (polar residues); that stretch reads SENLNTQPQASEE.

Belongs to the MS4A family. As to quaternary structure, interacts with CDKN3. Interacts with CDKN3-CDK2 complexes through its binding to CDKN3; this interaction facilitates dissociation of cyclin A from CDKN3-CDK2 complexes. In terms of tissue distribution, expressed at low levels only in specific immune tissues, such as, spleen, bone marrow and peripheral blood leukocytes.

It localises to the membrane. Hematopoietic modulator for the G1-S cell cycle transition. Modulates the level of phosphorylation of cyclin-dependent kinase 2 (CDK2) through its direct binding to cyclin-dependent kinase inhibitor 3 (CDKN3/KAP). The sequence is that of Membrane-spanning 4-domains subfamily A member 3 (Ms4a3) from Mus musculus (Mouse).